Consider the following 287-residue polypeptide: Pentatricopeptide repeat-containing protein At4g18975, chloroplastic (287 aa).

The transit peptide at 1-34 (MALCNLNPTQGIFPLQGLSKSQEFICFSLLQSPR) directs the protein to the chloroplast. 2 PPR repeats span residues 165–199 (TMGT…HTRS) and 201–235 (PRRL…KVSP).

Belongs to the PPR family. P subfamily.

Its subcellular location is the plastid. It is found in the chloroplast. This chain is Pentatricopeptide repeat-containing protein At4g18975, chloroplastic, found in Arabidopsis thaliana (Mouse-ear cress).